The following is a 90-amino-acid chain: MARTVQCVLLKKEADGLDFSPYPGELGKRIYEQVSKEAWQQWLKHQTMLVNENRLNLADARARQYLARQMERYFFGEGADQPTGYVPPTA.

It belongs to the Fe(2+)-trafficking protein family.

Functionally, could be a mediator in iron transactions between iron acquisition and iron-requiring processes, such as synthesis and/or repair of Fe-S clusters in biosynthetic enzymes. The chain is Probable Fe(2+)-trafficking protein from Leptothrix cholodnii (strain ATCC 51168 / LMG 8142 / SP-6) (Leptothrix discophora (strain SP-6)).